The sequence spans 90 residues: Large ribosomal subunit protein uL23c (90 aa).

The protein belongs to the universal ribosomal protein uL23 family. As to quaternary structure, part of the 50S ribosomal subunit.

Its subcellular location is the plastid. It localises to the chloroplast. Binds to 23S rRNA. The polypeptide is Large ribosomal subunit protein uL23c (rpl23) (Psilotum nudum (Whisk fern)).